We begin with the raw amino-acid sequence, 277 residues long: MYTGDPPQTRRPVTVGRLQRMKADGQKVVALTAYDYTFAVAEDQAGVDVILVGDSLGMVVQGRDTTVPVTVEEMVYHTRCVTAARPSALVMADMPFMSYATLEDGLRNAARLMQEGGAQMIKLEGAGEQAELVARLARAGIPVCAHLGLQPQLVHKLGGYRVQGRESAAADAMLADAQALEAAGADLLLLECVPAELGRRISQGLEIPVIGIGAGPDCDGQILVLQDILGVTPGRIPRFSKNFMNGAGSIQCALQAYVQAVRSGAFPDAAHSFGGQG.

Positions 54 and 93 each coordinate Mg(2+). 3-methyl-2-oxobutanoate contacts are provided by residues 54–55 (DS), Asp93, and Lys122. Glu124 is a Mg(2+) binding site. Glu191 functions as the Proton acceptor in the catalytic mechanism.

The protein belongs to the PanB family. As to quaternary structure, homodecamer; pentamer of dimers. The cofactor is Mg(2+).

The protein resides in the cytoplasm. The enzyme catalyses 3-methyl-2-oxobutanoate + (6R)-5,10-methylene-5,6,7,8-tetrahydrofolate + H2O = 2-dehydropantoate + (6S)-5,6,7,8-tetrahydrofolate. It participates in cofactor biosynthesis; (R)-pantothenate biosynthesis; (R)-pantoate from 3-methyl-2-oxobutanoate: step 1/2. Catalyzes the reversible reaction in which hydroxymethyl group from 5,10-methylenetetrahydrofolate is transferred onto alpha-ketoisovalerate to form ketopantoate. This is 3-methyl-2-oxobutanoate hydroxymethyltransferase from Alkalilimnicola ehrlichii (strain ATCC BAA-1101 / DSM 17681 / MLHE-1).